A 100-amino-acid polypeptide reads, in one-letter code: Apolipoprotein C-II (100 aa).

A signal peptide spans 1–22 (MGSRFLLALFLVLLVLGYEVQG). Residues 66–74 (SVDEKLRDM) are lipid binding. The lipoprotein lipase cofactor stretch occupies residues 78–100 (SSAAVSTYAGIFTDQILTLLKGE).

This sequence belongs to the apolipoprotein C2 family. Post-translationally, proapolipoprotein C-II is synthesized as a sialic acid containing glycoprotein which is subsequently desialylated prior to its proteolytic processing. In terms of processing, proapolipoprotein C-II, the major form found in plasma undergoes proteolytic cleavage of its N-terminal hexapeptide to generate the mature form apolipoprotein C-II, which occurs as the minor form in plasma.

Its subcellular location is the secreted. Functionally, component of chylomicrons, very low-density lipoproteins (VLDL), low-density lipoproteins (LDL), and high-density lipoproteins (HDL) in plasma. Plays an important role in lipoprotein metabolism as an activator of lipoprotein lipase. The polypeptide is Apolipoprotein C-II (Apoc2) (Neotoma lepida (Desert woodrat)).